Reading from the N-terminus, the 593-residue chain is NADH-quinone oxidoreductase subunit C/D (593 aa).

The tract at residues 1–184 (MTADSALYIP…DPYSLSAAKQ (184 aa)) is NADH dehydrogenase I subunit C. An NADH dehydrogenase I subunit D region spans residues 208–593 (DYMFLNLGPN…IDFVMADVDR (386 aa)).

It in the N-terminal section; belongs to the complex I 30 kDa subunit family. This sequence in the C-terminal section; belongs to the complex I 49 kDa subunit family. NDH-1 is composed of 13 different subunits. Subunits NuoB, CD, E, F, and G constitute the peripheral sector of the complex.

It is found in the cell inner membrane. The catalysed reaction is a quinone + NADH + 5 H(+)(in) = a quinol + NAD(+) + 4 H(+)(out). In terms of biological role, NDH-1 shuttles electrons from NADH, via FMN and iron-sulfur (Fe-S) centers, to quinones in the respiratory chain. The immediate electron acceptor for the enzyme in this species is believed to be ubiquinone. Couples the redox reaction to proton translocation (for every two electrons transferred, four hydrogen ions are translocated across the cytoplasmic membrane), and thus conserves the redox energy in a proton gradient. This is NADH-quinone oxidoreductase subunit C/D from Pseudomonas paraeruginosa (strain DSM 24068 / PA7) (Pseudomonas aeruginosa (strain PA7)).